A 273-amino-acid polypeptide reads, in one-letter code: 4-hydroxy-tetrahydrodipicolinate reductase (273 aa).

12–17 (GSGGRM) serves as a coordination point for NAD(+). NADP(+) is bound at residue Arg39. NAD(+) contacts are provided by residues 102-104 (GTT) and 126-129 (AANF). The Proton donor/acceptor role is filled by His159. His160 lines the (S)-2,3,4,5-tetrahydrodipicolinate pocket. Catalysis depends on Lys163, which acts as the Proton donor. 169–170 (GT) lines the (S)-2,3,4,5-tetrahydrodipicolinate pocket.

This sequence belongs to the DapB family. In terms of assembly, homotetramer.

It is found in the cytoplasm. The enzyme catalyses (S)-2,3,4,5-tetrahydrodipicolinate + NAD(+) + H2O = (2S,4S)-4-hydroxy-2,3,4,5-tetrahydrodipicolinate + NADH + H(+). It carries out the reaction (S)-2,3,4,5-tetrahydrodipicolinate + NADP(+) + H2O = (2S,4S)-4-hydroxy-2,3,4,5-tetrahydrodipicolinate + NADPH + H(+). Its pathway is amino-acid biosynthesis; L-lysine biosynthesis via DAP pathway; (S)-tetrahydrodipicolinate from L-aspartate: step 4/4. Its function is as follows. Catalyzes the conversion of 4-hydroxy-tetrahydrodipicolinate (HTPA) to tetrahydrodipicolinate. The protein is 4-hydroxy-tetrahydrodipicolinate reductase of Serratia proteamaculans (strain 568).